Here is an 872-residue protein sequence, read N- to C-terminus: Leucine--tRNA ligase (872 aa).

Residues 42 to 52 carry the 'HIGH' region motif; the sequence is PYPSGSLHMGH. Positions 634–638 match the 'KMSKS' region motif; it reads TMSKS. Lysine 637 is a binding site for ATP.

Belongs to the class-I aminoacyl-tRNA synthetase family.

The protein localises to the cytoplasm. It carries out the reaction tRNA(Leu) + L-leucine + ATP = L-leucyl-tRNA(Leu) + AMP + diphosphate. The protein is Leucine--tRNA ligase of Trichormus variabilis (strain ATCC 29413 / PCC 7937) (Anabaena variabilis).